Here is a 128-residue protein sequence, read N- to C-terminus: MRPPADPGARRRATHGRGLSAEGLALLVLMLKGYRPLARRFAAAGGEIDLIVRRGRTIAFVEVKARATLDAAATAIDARKRARVSRAARAWLARHPLAAGATLRADAVFVAPRRWPRHLPNAFEIEGL.

It belongs to the UPF0102 family.

The protein is UPF0102 protein Mext_0406 of Methylorubrum extorquens (strain PA1) (Methylobacterium extorquens).